A 289-amino-acid chain; its full sequence is Elongation factor Ts (289 aa).

Residues 82 to 85 (TDFL) form an involved in Mg(2+) ion dislocation from EF-Tu region.

It belongs to the EF-Ts family.

Its subcellular location is the cytoplasm. Functionally, associates with the EF-Tu.GDP complex and induces the exchange of GDP to GTP. It remains bound to the aminoacyl-tRNA.EF-Tu.GTP complex up to the GTP hydrolysis stage on the ribosome. The polypeptide is Elongation factor Ts (Pseudomonas aeruginosa (strain LESB58)).